The following is a 1047-amino-acid chain: Carbamoyl phosphate synthase large chain (1047 aa).

A carboxyphosphate synthetic domain region spans residues 1–398 (MPRRDDIHRI…ALMKAIASLD (398 aa)). The ATP site is built by Arg129, Arg169, Gly175, Gly176, Glu208, Leu210, Glu215, Gly241, Val242, His243, Gln284, and Glu296. An ATP-grasp 1 domain is found at 133-325 (YEFLKAMGEP…IARIAAKIAA (193 aa)). Mg(2+) is bound by residues Gln284, Glu296, and Asn298. Mn(2+)-binding residues include Gln284, Glu296, and Asn298. The oligomerization domain stretch occupies residues 399–539 (NAFSSNIRLH…YSTYEDEDET (141 aa)). Residues 540–916 (PDLSGSIMII…ALRKSLQRSI (377 aa)) are carbamoyl phosphate synthetic domain. Residues 665-854 (SRVIEGLGIK…WVRLAVECMI (190 aa)) enclose the ATP-grasp 2 domain. 10 residues coordinate ATP: Arg701, Lys738, Leu740, Glu745, Gly770, Val771, His772, Ser773, Gln813, and Glu825. The Mg(2+) site is built by Gln813, Glu825, and Asn827. The Mn(2+) site is built by Gln813, Glu825, and Asn827. One can recognise an MGS-like domain in the interval 910–1047 (KSLQRSISSV…REIGDYLQVS (138 aa)). Positions 916–1047 (ISSVLITVRD…REIGDYLQVS (132 aa)) are allosteric domain.

This sequence belongs to the CarB family. As to quaternary structure, composed of two chains; the small (or glutamine) chain promotes the hydrolysis of glutamine to ammonia, which is used by the large (or ammonia) chain to synthesize carbamoyl phosphate. Tetramer of heterodimers (alpha,beta)4. Mg(2+) is required as a cofactor. It depends on Mn(2+) as a cofactor.

It catalyses the reaction hydrogencarbonate + L-glutamine + 2 ATP + H2O = carbamoyl phosphate + L-glutamate + 2 ADP + phosphate + 2 H(+). The catalysed reaction is hydrogencarbonate + NH4(+) + 2 ATP = carbamoyl phosphate + 2 ADP + phosphate + 2 H(+). It functions in the pathway amino-acid biosynthesis; L-arginine biosynthesis; carbamoyl phosphate from bicarbonate: step 1/1. The protein operates within pyrimidine metabolism; UMP biosynthesis via de novo pathway; (S)-dihydroorotate from bicarbonate: step 1/3. Functionally, large subunit of the glutamine-dependent carbamoyl phosphate synthetase (CPSase). CPSase catalyzes the formation of carbamoyl phosphate from the ammonia moiety of glutamine, carbonate, and phosphate donated by ATP, constituting the first step of 2 biosynthetic pathways, one leading to arginine and/or urea and the other to pyrimidine nucleotides. The large subunit (synthetase) binds the substrates ammonia (free or transferred from glutamine from the small subunit), hydrogencarbonate and ATP and carries out an ATP-coupled ligase reaction, activating hydrogencarbonate by forming carboxy phosphate which reacts with ammonia to form carbamoyl phosphate. The polypeptide is Carbamoyl phosphate synthase large chain (Thermoplasma acidophilum (strain ATCC 25905 / DSM 1728 / JCM 9062 / NBRC 15155 / AMRC-C165)).